A 243-amino-acid chain; its full sequence is Uridylate kinase (243 aa).

15–18 is a binding site for ATP; the sequence is KLSG. Residues 23 to 28 form an involved in allosteric activation by GTP region; the sequence is GEEGFG. Gly57 lines the UMP pocket. 2 residues coordinate ATP: Gly58 and Arg62. UMP contacts are provided by residues Asp77 and 138–145; that span reads TGNPFFTT. Residues Thr165, Phe171, and Asp174 each contribute to the ATP site.

It belongs to the UMP kinase family. In terms of assembly, homohexamer.

Its subcellular location is the cytoplasm. The catalysed reaction is UMP + ATP = UDP + ADP. It participates in pyrimidine metabolism; CTP biosynthesis via de novo pathway; UDP from UMP (UMPK route): step 1/1. Its activity is regulated as follows. Allosterically activated by GTP. Inhibited by UTP. Functionally, catalyzes the reversible phosphorylation of UMP to UDP. This is Uridylate kinase from Vibrio campbellii (strain ATCC BAA-1116).